Here is a 556-residue protein sequence, read N- to C-terminus: Pumilio homolog 11 (556 aa).

The 342-residue stretch at 215–556 folds into the PUM-HD domain; the sequence is GGSRELDGSA…RIFSKNLWKK (342 aa). Pumilio repeat units follow at residues 238–276, 277–313, 316–351, 353–388, 389–424, 425–459, 460–495, and 496–531; these read SMVD…IIFK, EVIN…ILIR, SKPG…SLVK, ALVP…FILE, AATK…KLVD, EISR…VLFE, LRGN…VNEL, and VSVL…SLVE.

It is found in the cytoplasm. In terms of biological role, sequence-specific RNA-binding protein that regulates translation and mRNA stability by binding the 3'-UTR of target mRNAs. The protein is Pumilio homolog 11 (APUM11) of Arabidopsis thaliana (Mouse-ear cress).